The sequence spans 101 residues: MVSLSDYLILSSVIFCIGLVGIFVNRTNIITLLMCVELILVAVNTNFVAFSHFLGNEVGQIFVFFILTVAAAEVAIGLAILTLLFRNRGSISVDVTNSLKG.

3 helical membrane passes run 4-24 (LSDYLILSSVIFCIGLVGIFV), 29-49 (IITLLMCVELILVAVNTNFVA), and 61-81 (IFVFFILTVAAAEVAIGLAIL).

Belongs to the complex I subunit 4L family. In terms of assembly, NDH-1 is composed of 14 different subunits. Subunits NuoA, H, J, K, L, M, N constitute the membrane sector of the complex.

Its subcellular location is the cell inner membrane. The enzyme catalyses a quinone + NADH + 5 H(+)(in) = a quinol + NAD(+) + 4 H(+)(out). Its function is as follows. NDH-1 shuttles electrons from NADH, via FMN and iron-sulfur (Fe-S) centers, to quinones in the respiratory chain. The immediate electron acceptor for the enzyme in this species is believed to be ubiquinone. Couples the redox reaction to proton translocation (for every two electrons transferred, four hydrogen ions are translocated across the cytoplasmic membrane), and thus conserves the redox energy in a proton gradient. This is NADH-quinone oxidoreductase subunit K from Ruthia magnifica subsp. Calyptogena magnifica.